Consider the following 122-residue polypeptide: Large ribosomal subunit protein uL14 (122 aa).

The protein belongs to the universal ribosomal protein uL14 family. Part of the 50S ribosomal subunit. Forms a cluster with proteins L3 and L19. In the 70S ribosome, L14 and L19 interact and together make contacts with the 16S rRNA in bridges B5 and B8.

Its function is as follows. Binds to 23S rRNA. Forms part of two intersubunit bridges in the 70S ribosome. The sequence is that of Large ribosomal subunit protein uL14 from Baumannia cicadellinicola subsp. Homalodisca coagulata.